A 304-amino-acid polypeptide reads, in one-letter code: 4-diphosphocytidyl-2-C-methyl-D-erythritol kinase (304 aa).

K20 is a catalytic residue. Position 106 to 116 (106 to 116) interacts with ATP; the sequence is PVASGIGGGSG. D148 is a catalytic residue.

It belongs to the GHMP kinase family. IspE subfamily.

It carries out the reaction 4-CDP-2-C-methyl-D-erythritol + ATP = 4-CDP-2-C-methyl-D-erythritol 2-phosphate + ADP + H(+). It functions in the pathway isoprenoid biosynthesis; isopentenyl diphosphate biosynthesis via DXP pathway; isopentenyl diphosphate from 1-deoxy-D-xylulose 5-phosphate: step 3/6. In terms of biological role, catalyzes the phosphorylation of the position 2 hydroxy group of 4-diphosphocytidyl-2C-methyl-D-erythritol. This is 4-diphosphocytidyl-2-C-methyl-D-erythritol kinase from Bartonella bacilliformis (strain ATCC 35685 / KC583 / Herrer 020/F12,63).